The chain runs to 283 residues: Polyprenyl-phosphate transporter (283 aa).

9 consecutive transmembrane segments (helical) span residues 27–47, 51–71, 85–105, 112–132, 148–168, 169–189, 197–217, 230–250, and 255–275; these read GTIA…SGIF, FWPS…AMGS, IPTM…LLKI, FTTK…VITL, TSLI…MLLP, GISG…MLAI, FAGL…FIIS, LMTF…VFPG, and IVMW…SLTL.

This sequence belongs to the PopT family.

It is found in the cell membrane. Its activity is regulated as follows. Active in alkaline conditions. Functionally, flippase that catalyzes the transport of undecaprenyl phosphate (UndP) across the cytoplasmic membrane, from the external side to the cytoplasmic side. Is involved in UndP recycling during peptidoglycan synthesis. Necessary for peptidoglycan maintenance. The chain is Polyprenyl-phosphate transporter from Staphylococcus aureus (strain NCTC 8325 / PS 47).